A 298-amino-acid polypeptide reads, in one-letter code: GTP cyclohydrolase FolE2 (298 aa).

The protein belongs to the GTP cyclohydrolase IV family.

It carries out the reaction GTP + H2O = 7,8-dihydroneopterin 3'-triphosphate + formate + H(+). It participates in cofactor biosynthesis; 7,8-dihydroneopterin triphosphate biosynthesis; 7,8-dihydroneopterin triphosphate from GTP: step 1/1. Converts GTP to 7,8-dihydroneopterin triphosphate. This Pseudomonas aeruginosa (strain LESB58) protein is GTP cyclohydrolase FolE2.